The primary structure comprises 82 residues: Large ribosomal subunit protein uL23 (82 aa).

It belongs to the universal ribosomal protein uL23 family. As to quaternary structure, part of the 50S ribosomal subunit. Contacts protein L29.

Its function is as follows. Binds to 23S rRNA. One of the proteins that surrounds the polypeptide exit tunnel on the outside of the ribosome. The protein is Large ribosomal subunit protein uL23 of Methanospirillum hungatei JF-1 (strain ATCC 27890 / DSM 864 / NBRC 100397 / JF-1).